Consider the following 160-residue polypeptide: Cyclic pyranopterin monophosphate synthase (160 aa).

Residues 74 to 76 (LSH) and 112 to 113 (ME) each bind substrate. Residue aspartate 127 is part of the active site.

The protein belongs to the MoaC family. In terms of assembly, homohexamer; trimer of dimers.

It catalyses the reaction (8S)-3',8-cyclo-7,8-dihydroguanosine 5'-triphosphate = cyclic pyranopterin phosphate + diphosphate. It functions in the pathway cofactor biosynthesis; molybdopterin biosynthesis. Its function is as follows. Catalyzes the conversion of (8S)-3',8-cyclo-7,8-dihydroguanosine 5'-triphosphate to cyclic pyranopterin monophosphate (cPMP). The protein is Cyclic pyranopterin monophosphate synthase of Trichlorobacter lovleyi (strain ATCC BAA-1151 / DSM 17278 / SZ) (Geobacter lovleyi).